A 661-amino-acid chain; its full sequence is Putative DUF21 domain-containing protein At3g13070, chloroplastic (661 aa).

A chloroplast-targeting transit peptide spans 1–71 (MMGMALELSV…RSCEFSYRSR (71 aa)). Helical transmembrane passes span 105 to 125 (GIVI…KVLA), 162 to 182 (GLIL…ETSI), 213 to 233 (FLTT…ALVT), 239 to 259 (IFGE…ILLL), and 285 to 305 (WLSL…MGIL). The region spanning 154 to 340 (VLTVLREQGL…ELSGAIEEEE (187 aa)) is the CNNM transmembrane domain. CBS domains lie at 359 to 420 (MTPL…LLES) and 426 to 484 (MAHK…IFDE). Disordered stretches follow at residues 559 to 578 (ESWE…QEPK) and 628 to 661 (SSEE…KKQQ). 2 stretches are compositionally biased toward acidic residues: residues 560–570 (SWEEDGEEEEG) and 630–643 (EEDD…EDQS). The segment covering 648-661 (LDEHVLADNSKKQQ) has biased composition (basic and acidic residues).

It is found in the plastid. Its subcellular location is the chloroplast membrane. The sequence is that of Putative DUF21 domain-containing protein At3g13070, chloroplastic (CBSDUFCH1) from Arabidopsis thaliana (Mouse-ear cress).